We begin with the raw amino-acid sequence, 342 residues long: N-acetyl-gamma-glutamyl-phosphate reductase (342 aa).

The active site involves Cys149.

Belongs to the NAGSA dehydrogenase family. Type 1 subfamily.

It localises to the cytoplasm. The enzyme catalyses N-acetyl-L-glutamate 5-semialdehyde + phosphate + NADP(+) = N-acetyl-L-glutamyl 5-phosphate + NADPH + H(+). It functions in the pathway amino-acid biosynthesis; L-arginine biosynthesis; N(2)-acetyl-L-ornithine from L-glutamate: step 3/4. Functionally, catalyzes the NADPH-dependent reduction of N-acetyl-5-glutamyl phosphate to yield N-acetyl-L-glutamate 5-semialdehyde. This Rhodobacter capsulatus (strain ATCC BAA-309 / NBRC 16581 / SB1003) protein is N-acetyl-gamma-glutamyl-phosphate reductase.